The following is a 380-amino-acid chain: MSTSNLFSTVPFGKNVLNHKIVLSPMTRFRADDNGVPLSYMKTFYAQRASVRGTLLVTDAVAICPRTKGFPNVPGIWHKDRIAAWKEVVDEVHSKGSFIWLQLWATGRAADLEALTSRGLKLGSSSEVPVAPGEPTPRALDEDEIQQYILDYVQGAKNAVHGAGFDGVEIHGANGFLIDQFLQSSCNRRTDQWGGSIENRSRFGLEITRGVVDAVGHDRVGMKLSPWSTFQGMGTMDDLVPQFEHFITCLREMDIAYLHLANSRWVEEEDPSIRTHPDFHNQTFVQMWGKKRPILLAGGYDPDSARRLVDQTYSDRNNVLVVFGRHYISNPDLPFRLRMGIALQKYNRDTFYIPCSGEGYVDYPFCKEYLDQADEAAVAG.

Residues 25–27, Ala-60, Gln-102, and His-171 each bind FMN; that span reads PMT. Residues His-171 and Asn-174 each coordinate substrate. Residues Lys-223, Gly-299, 324–325, and Arg-325 each bind FMN; that span reads GR. A substrate-binding site is contributed by Tyr-352.

It belongs to the NADH:flavin oxidoreductase/NADH oxidase family.

In terms of biological role, probable inactive dehydrogenase; part of the gene cluster that mediates the biosynthesis of fungal ergot alkaloid. DmaW catalyzes the first step of ergot alkaloid biosynthesis by condensing dimethylallyl diphosphate (DMAP) and tryptophan to form 4-dimethylallyl-L-tryptophan. The second step is catalyzed by the methyltransferase easF that methylates 4-dimethylallyl-L-tryptophan in the presence of S-adenosyl-L-methionine, resulting in the formation of 4-dimethylallyl-L-abrine. The catalase easC and the FAD-dependent oxidoreductase easE then transform 4-dimethylallyl-L-abrine to chanoclavine-I which is further oxidized by easD in the presence of NAD(+), resulting in the formation of chanoclavine-I aldehyde. Agroclavine dehydrogenase easG then mediates the conversion of chanoclavine-I aldehyde to agroclavine via a non-enzymatic adduct reaction: the substrate is an iminium intermediate that is formed spontaneously from chanoclavine-I aldehyde in the presence of glutathione. The presence of easA is not required to complete this reaction. Further conversion of agroclavine to paspalic acid is a two-step process involving oxidation of agroclavine to elymoclavine and of elymoclavine to paspalic acid, the second step being performed by the elymoclavine oxidase cloA. Paspalic acid is then further converted to D-lysergic acid. Ergopeptines are assembled from D-lysergic acid and three different amino acids by the D-lysergyl-peptide-synthetases composed each of a monomudular and a trimodular nonribosomal peptide synthetase subunit. LpsB and lpsC encode the monomodular subunits responsible for D-lysergic acid activation and incorporation into the ergopeptine backbone. LpsA1 and A2 subunits encode the trimodular nonribosomal peptide synthetase assembling the tripeptide portion of ergopeptines. LpsA1 is responsible for formation of the major ergopeptine, ergotamine, and lpsA2 for alpha-ergocryptine, the minor ergopeptine of the total alkaloid mixture elaborated by C.purpurea. D-lysergyl-tripeptides are assembled by the nonribosomal peptide synthetases and released as N-(D-lysergyl-aminoacyl)-lactams. Cyclolization of the D-lysergyl-tripeptides is performed by the Fe(2+)/2-ketoglutarate-dependent dioxygenase easH which introduces a hydroxyl group into N-(D-lysergyl-aminoacyl)-lactam at alpha-C of the aminoacyl residue followed by spontaneous condensation with the terminal lactam carbonyl group. This chain is Probable inactive dehydrogenase easA, found in Claviceps purpurea (Ergot fungus).